A 348-amino-acid chain; its full sequence is S-adenosylmethionine:tRNA ribosyltransferase-isomerase (348 aa).

Belongs to the QueA family. In terms of assembly, monomer.

It is found in the cytoplasm. The enzyme catalyses 7-aminomethyl-7-carbaguanosine(34) in tRNA + S-adenosyl-L-methionine = epoxyqueuosine(34) in tRNA + adenine + L-methionine + 2 H(+). The protein operates within tRNA modification; tRNA-queuosine biosynthesis. Its function is as follows. Transfers and isomerizes the ribose moiety from AdoMet to the 7-aminomethyl group of 7-deazaguanine (preQ1-tRNA) to give epoxyqueuosine (oQ-tRNA). The sequence is that of S-adenosylmethionine:tRNA ribosyltransferase-isomerase from Polynucleobacter necessarius subsp. necessarius (strain STIR1).